Consider the following 269-residue polypeptide: Hydroxyethylthiazole kinase (269 aa).

Substrate is bound at residue M46. Residues R122 and T168 each contribute to the ATP site. Residue G195 participates in substrate binding.

Belongs to the Thz kinase family. Mg(2+) is required as a cofactor.

The enzyme catalyses 5-(2-hydroxyethyl)-4-methylthiazole + ATP = 4-methyl-5-(2-phosphooxyethyl)-thiazole + ADP + H(+). It participates in cofactor biosynthesis; thiamine diphosphate biosynthesis; 4-methyl-5-(2-phosphoethyl)-thiazole from 5-(2-hydroxyethyl)-4-methylthiazole: step 1/1. Functionally, catalyzes the phosphorylation of the hydroxyl group of 4-methyl-5-beta-hydroxyethylthiazole (THZ). This Geobacillus thermodenitrificans (strain NG80-2) protein is Hydroxyethylthiazole kinase.